The primary structure comprises 175 residues: Large ribosomal subunit protein uL10 (175 aa).

Belongs to the universal ribosomal protein uL10 family. In terms of assembly, part of the ribosomal stalk of the 50S ribosomal subunit. The N-terminus interacts with L11 and the large rRNA to form the base of the stalk. The C-terminus forms an elongated spine to which L12 dimers bind in a sequential fashion forming a multimeric L10(L12)X complex.

Functionally, forms part of the ribosomal stalk, playing a central role in the interaction of the ribosome with GTP-bound translation factors. In Prochlorococcus marinus (strain SARG / CCMP1375 / SS120), this protein is Large ribosomal subunit protein uL10.